The primary structure comprises 280 residues: Polyamine aminopropyltransferase (280 aa).

In terms of domain architecture, PABS spans 2–235; sequence GGWIDEEHRG…GWWSWTFAAV (234 aa). Q29 serves as a coordination point for S-methyl-5'-thioadenosine. H60 and D84 together coordinate spermidine. Residues E104 and 136 to 137 each bind S-methyl-5'-thioadenosine; that span reads DG. D155 serves as the catalytic Proton acceptor. P162 lines the S-methyl-5'-thioadenosine pocket.

Belongs to the spermidine/spermine synthase family. In terms of assembly, homodimer or homotetramer.

The protein localises to the cytoplasm. The enzyme catalyses S-adenosyl 3-(methylsulfanyl)propylamine + putrescine = S-methyl-5'-thioadenosine + spermidine + H(+). The protein operates within amine and polyamine biosynthesis; spermidine biosynthesis; spermidine from putrescine: step 1/1. Functionally, catalyzes the irreversible transfer of a propylamine group from the amino donor S-adenosylmethioninamine (decarboxy-AdoMet) to putrescine (1,4-diaminobutane) to yield spermidine. This Parasynechococcus marenigrum (strain WH8102) protein is Polyamine aminopropyltransferase.